The chain runs to 242 residues: UPF0246 protein SP70585_1589 (242 aa).

It belongs to the UPF0246 family.

The chain is UPF0246 protein SP70585_1589 from Streptococcus pneumoniae (strain 70585).